The primary structure comprises 258 residues: HLA class II histocompatibility antigen, DP beta 1 chain (258 aa).

The signal sequence occupies residues 1-29 (MMVLQVSAAPRTVALTALLMVLLTSVVQG). The beta-1 stretch occupies residues 30–121 (RATPENYLFQ…LGGPMTLQRR (92 aa)). Topologically, residues 30–225 (RATPENYLFQ…KAQSDSARSK (196 aa)) are extracellular. 2 cysteine pairs are disulfide-bonded: Cys-44/Cys-106 and Cys-144/Cys-200. Asn-48 carries N-linked (GlcNAc...) asparagine glycosylation. The segment at 122 to 215 (VQPRVNVSPS…SLDSPVTVEW (94 aa)) is beta-2. The Ig-like C1-type domain maps to 124 to 212 (PRVNVSPSKK…EHTSLDSPVT (89 aa)). The segment at 216 to 225 (KAQSDSARSK) is connecting peptide. Residues 226–246 (TLTGAGGFVLGLIICGVGIFM) traverse the membrane as a helical segment. The Cytoplasmic segment spans residues 247–258 (HRRSKKVQRGSA).

The protein belongs to the MHC class II family. Heterodimer of an alpha and a beta subunit; also referred as MHC class II molecule. In the endoplasmic reticulum (ER) it forms a heterononamer; 3 MHC class II molecules bind to a CD74 homotrimer (also known as invariant chain or HLA class II histocompatibility antigen gamma chain). In the endosomal/lysosomal system; CD74 undergoes sequential degradation by various proteases; leaving a small fragment termed CLIP on each MHC class II molecule. MHC class II molecule interacts with HLA_DM, and HLA_DO in B-cells, in order to release CLIP and facilitate the binding of antigenic peptides.

It localises to the cell membrane. Its subcellular location is the endoplasmic reticulum membrane. The protein localises to the golgi apparatus. It is found in the trans-Golgi network membrane. The protein resides in the endosome membrane. It localises to the lysosome membrane. Binds peptides derived from antigens that access the endocytic route of antigen presenting cells (APC) and presents them on the cell surface for recognition by the CD4 T-cells. The peptide binding cleft accommodates peptides of 10-30 residues. The peptides presented by MHC class II molecules are generated mostly by degradation of proteins that access the endocytic route, where they are processed by lysosomal proteases and other hydrolases. Exogenous antigens that have been endocytosed by the APC are thus readily available for presentation via MHC II molecules, and for this reason this antigen presentation pathway is usually referred to as exogenous. As membrane proteins on their way to degradation in lysosomes as part of their normal turn-over are also contained in the endosomal/lysosomal compartments, exogenous antigens must compete with those derived from endogenous components. Autophagy is also a source of endogenous peptides, autophagosomes constitutively fuse with MHC class II loading compartments. In addition to APCs, other cells of the gastrointestinal tract, such as epithelial cells, express MHC class II molecules and CD74 and act as APCs, which is an unusual trait of the GI tract. To produce a MHC class II molecule that presents an antigen, three MHC class II molecules (heterodimers of an alpha and a beta chain) associate with a CD74 trimer in the ER to form a heterononamer. Soon after the entry of this complex into the endosomal/lysosomal system where antigen processing occurs, CD74 undergoes a sequential degradation by various proteases, including CTSS and CTSL, leaving a small fragment termed CLIP (class-II-associated invariant chain peptide). The removal of CLIP is facilitated by HLA-DM via direct binding to the alpha-beta-CLIP complex so that CLIP is released. HLA-DM stabilizes MHC class II molecules until primary high affinity antigenic peptides are bound. The MHC II molecule bound to a peptide is then transported to the cell membrane surface. In B-cells, the interaction between HLA-DM and MHC class II molecules is regulated by HLA-DO. Primary dendritic cells (DCs) also to express HLA-DO. Lysosomal microenvironment has been implicated in the regulation of antigen loading into MHC II molecules, increased acidification produces increased proteolysis and efficient peptide loading. In Homo sapiens (Human), this protein is HLA class II histocompatibility antigen, DP beta 1 chain (HLA-DPB1).